A 406-amino-acid polypeptide reads, in one-letter code: Phosphoglycerate kinase (406 aa).

Substrate is bound by residues 23–25 (DIN), arginine 38, 61–64 (HQGR), arginine 117, and arginine 157. Residues glutamate 331 and 357-360 (GGHI) contribute to the ATP site.

It belongs to the phosphoglycerate kinase family. As to quaternary structure, monomer.

The protein localises to the cytoplasm. It carries out the reaction (2R)-3-phosphoglycerate + ATP = (2R)-3-phospho-glyceroyl phosphate + ADP. The protein operates within carbohydrate degradation; glycolysis; pyruvate from D-glyceraldehyde 3-phosphate: step 2/5. The protein is Phosphoglycerate kinase of Methanopyrus kandleri (strain AV19 / DSM 6324 / JCM 9639 / NBRC 100938).